The primary structure comprises 265 residues: MIKWPWKAQEITQNEDWPWDDALAIPLLVNLTAQEQARLIALAERFLQQKRLVALQGFELDSLKSARIALIFCLPILELGIEWLDGFHEVLIYPAPFVVDDEWEDDIGLVHSQRVVQAGQSWQQGPIILNWLDIQDSFDASGFNLIIHEVAHKLDMRNGDRASGIPFIPLRDVAGWEHDLHAAMNNIQDEIDLVGESAASIDAYAATDPAECFAVLSEYFFSAPELFAPRFPALWQRFCQFYRQDPSQRLRVSAAEGDYGEESEH.

His-111, His-148, His-152, and Glu-211 together coordinate Zn(2+).

The protein belongs to the MtfA family. In terms of assembly, interacts with Mlc. Zn(2+) is required as a cofactor.

The protein localises to the cytoplasm. In terms of biological role, involved in the modulation of the activity of the glucose-phosphotransferase system (glucose-PTS). Interacts with the transcriptional repressor Mlc, preventing its interaction with DNA and leading to the modulation of expression of genes regulated by Mlc, including ptsG, which encodes the PTS system glucose-specific EIICB component. Its function is as follows. Shows zinc-dependent metallopeptidase activity. The protein is Mlc titration factor A of Salmonella gallinarum (strain 287/91 / NCTC 13346).